Consider the following 260-residue polypeptide: Adenosylcobinamide-GDP ribazoletransferase (260 aa).

A run of 8 helical transmembrane segments spans residues 3 to 23, 36 to 56, 60 to 80, 108 to 128, 133 to 153, 180 to 200, 206 to 226, and 239 to 259; these read APLW…LPAW, FAPW…LVLI, WPTS…SGGL, VGAS…AALL, LAPL…LWAM, ALPA…LMIV, MVLM…PELL, and GASV…LLTA.

Belongs to the CobS family. Requires Mg(2+) as cofactor.

It localises to the cell inner membrane. It carries out the reaction alpha-ribazole + adenosylcob(III)inamide-GDP = adenosylcob(III)alamin + GMP + H(+). The catalysed reaction is alpha-ribazole 5'-phosphate + adenosylcob(III)inamide-GDP = adenosylcob(III)alamin 5'-phosphate + GMP + H(+). The protein operates within cofactor biosynthesis; adenosylcobalamin biosynthesis; adenosylcobalamin from cob(II)yrinate a,c-diamide: step 7/7. Functionally, joins adenosylcobinamide-GDP and alpha-ribazole to generate adenosylcobalamin (Ado-cobalamin). Also synthesizes adenosylcobalamin 5'-phosphate from adenosylcobinamide-GDP and alpha-ribazole 5'-phosphate. The protein is Adenosylcobinamide-GDP ribazoletransferase of Prochlorococcus marinus (strain MIT 9303).